A 503-amino-acid chain; its full sequence is TGF-beta receptor type-1 (503 aa).

Positions 1-33 are cleaved as a signal peptide; that stretch reads MEAAVAAPRPRLLLLVLAAAAAAAAALLPGATA. The Extracellular portion of the chain corresponds to 34–126; it reads LQCFCHLCTK…SSPGLGPVEL (93 aa). Cystine bridges form between Cys-36/Cys-54, Cys-38/Cys-41, Cys-48/Cys-71, Cys-86/Cys-100, and Cys-101/Cys-106. Residue Asn-45 is glycosylated (N-linked (GlcNAc...) asparagine). The chain crosses the membrane as a helical span at residues 127–147; that stretch reads AAVIAGPVCFVCISLMLMVYI. Topologically, residues 148 to 503 are cytoplasmic; sequence CHNRTVIHHR…QLSQQEGIKM (356 aa). Residue Ser-165 is modified to Phosphoserine. Positions 175 to 204 constitute a GS domain; that stretch reads TTLKDLIYDMTTSGSGSGLPLLVQRTIART. Phosphothreonine; by TGFBR2 occurs at positions 185 and 186. 3 positions are modified to phosphoserine; by TGFBR2: Ser-187, Ser-189, and Ser-191. The short motif at 193–194 is the FKBP1A-binding element; that stretch reads LP. The region spanning 205–495 is the Protein kinase domain; sequence IVLQESIGKG…LRIKKTLSQL (291 aa). ATP contacts are provided by residues 211–219 and Lys-232; that span reads IGKGRFGEV. Lys-268 participates in a covalent cross-link: Glycyl lysine isopeptide (Lys-Gly) (interchain with G-Cter in ubiquitin). Residue Asp-333 is the Proton acceptor of the active site. A Glycyl lysine isopeptide (Lys-Gly) (interchain with G-Cter in SUMO) cross-link involves residue Lys-391.

Belongs to the protein kinase superfamily. TKL Ser/Thr protein kinase family. TGFB receptor subfamily. In terms of assembly, homodimer; in the endoplasmic reticulum but also at the cell membrane. Heterohexamer; TGFB1, TGFB2 and TGFB3 homodimeric ligands assemble a functional receptor composed of two TGFBR1 and TGFBR2 heterodimers to form a ligand-receptor heterohexamer. The respective affinity of TGBRB1 and TGFBR2 for the ligands may modulate the kinetics of assembly of the receptor and may explain the different biological activities of TGFB1, TGFB2 and TGFB3. Component of a complex composed of TSC22D1 (via N-terminus), TGFBR1 and TGFBR2; the interaction between TSC22D1 and TGFBR1 is inhibited by SMAD7 and promoted by TGFB1. Interacts with CD109; inhibits TGF-beta receptor activation in keratinocytes. Interacts with RBPMS. Interacts (unphosphorylated) with FKBP1A; prevents TGFBR1 phosphorylation by TGFBR2 and stabilizes it in the inactive conformation. Interacts with SMAD2, SMAD3 and ZFYVE9; ZFYVE9 recruits SMAD2 and SMAD3 to the TGF-beta receptor. Interacts with TRAF6 and MAP3K7; induces MAP3K7 activation by TRAF6. Interacts with PARD6A; involved in TGF-beta induced epithelial to mesenchymal transition. Interacts with NEDD4L. Interacts with SMAD7, SMURF1 and SMURF2; SMAD7 recruits NEDD4L, SMURF1 and SMURF2 to the TGF-beta receptor. Interacts with USP15 and VPS39. Interacts with SDCBP (via C-terminus). Interacts with CAV1 and this interaction is impaired in the presence of SDCBP. Interacts with APPL1; interaction is TGF beta dependent; mediates trafficking of the TGFBR1 from the endosomes to the nucleus via microtubules in a TRAF6-dependent manner. Interacts with GPR50; this interaction promotes the constitutive activation of SMAD signaling pathway. It depends on Mg(2+) as a cofactor. Requires Mn(2+) as cofactor. In terms of processing, phosphorylated at basal levels in the absence of ligand. Activated upon phosphorylation by TGFBR2, mainly in the GS domain. Phosphorylation in the GS domain abrogates FKBP1A-binding. Post-translationally, N-Glycosylated. Ubiquitinated; undergoes ubiquitination catalyzed by several E3 ubiquitin ligases including SMURF1, SMURF2 and NEDD4L2. Results in the proteasomal and/or lysosomal degradation of the receptor thereby negatively regulating its activity. Deubiquitinated by USP15, leading to stabilization of the protein and enhanced TGF-beta signal. Its ubiquitination and proteasome-mediated degradation is negatively regulated by SDCBP. Ubiquitinated by BFAR via'Lys-63'-linked ubiquitination at Lys-268, leading to TGF-beta signaling activation. In terms of tissue distribution, found in all tissues examined, most abundant in placenta and least abundant in brain and heart. Expressed in a variety of cancer cell lines.

Its subcellular location is the cell membrane. The protein resides in the cell junction. The protein localises to the tight junction. It is found in the cell surface. It localises to the membrane raft. The enzyme catalyses L-threonyl-[receptor-protein] + ATP = O-phospho-L-threonyl-[receptor-protein] + ADP + H(+). It carries out the reaction L-seryl-[receptor-protein] + ATP = O-phospho-L-seryl-[receptor-protein] + ADP + H(+). Kept in an inactive conformation by FKBP1A preventing receptor activation in absence of ligand. CD109 is another inhibitor of the receptor. Its function is as follows. Transmembrane serine/threonine kinase forming with the TGF-beta type II serine/threonine kinase receptor, TGFBR2, the non-promiscuous receptor for the TGF-beta cytokines TGFB1, TGFB2 and TGFB3. Transduces the TGFB1, TGFB2 and TGFB3 signal from the cell surface to the cytoplasm and is thus regulating a plethora of physiological and pathological processes including cell cycle arrest in epithelial and hematopoietic cells, control of mesenchymal cell proliferation and differentiation, wound healing, extracellular matrix production, immunosuppression and carcinogenesis. The formation of the receptor complex composed of 2 TGFBR1 and 2 TGFBR2 molecules symmetrically bound to the cytokine dimer results in the phosphorylation and the activation of TGFBR1 by the constitutively active TGFBR2. Activated TGFBR1 phosphorylates SMAD2 which dissociates from the receptor and interacts with SMAD4. The SMAD2-SMAD4 complex is subsequently translocated to the nucleus where it modulates the transcription of the TGF-beta-regulated genes. This constitutes the canonical SMAD-dependent TGF-beta signaling cascade. Also involved in non-canonical, SMAD-independent TGF-beta signaling pathways. For instance, TGFBR1 induces TRAF6 autoubiquitination which in turn results in MAP3K7 ubiquitination and activation to trigger apoptosis. Also regulates epithelial to mesenchymal transition through a SMAD-independent signaling pathway through PARD6A phosphorylation and activation. In Homo sapiens (Human), this protein is TGF-beta receptor type-1 (TGFBR1).